A 210-amino-acid chain; its full sequence is MTTISAALPSGRLLEDSKAFLKKIGINVKEPAKRELISYENGYAFYFPRAFDVPVYVENGVDIGICGSDVVLERNNEVYIPLELPFGKCRMSIILPENREISFQNMEGYKIATKYPEITKNFFSEKGLKVKILKLNGAVELAAKTGIADAIVDIVDTGNTIKANNLKEAYKIMDISAVLLVNRITQKTKFDFINDLINKAKNYKNGVKGH.

This sequence belongs to the ATP phosphoribosyltransferase family. Short subfamily. Heteromultimer composed of HisG and HisZ subunits.

The protein resides in the cytoplasm. The catalysed reaction is 1-(5-phospho-beta-D-ribosyl)-ATP + diphosphate = 5-phospho-alpha-D-ribose 1-diphosphate + ATP. The protein operates within amino-acid biosynthesis; L-histidine biosynthesis; L-histidine from 5-phospho-alpha-D-ribose 1-diphosphate: step 1/9. Its function is as follows. Catalyzes the condensation of ATP and 5-phosphoribose 1-diphosphate to form N'-(5'-phosphoribosyl)-ATP (PR-ATP). Has a crucial role in the pathway because the rate of histidine biosynthesis seems to be controlled primarily by regulation of HisG enzymatic activity. This Petrotoga mobilis (strain DSM 10674 / SJ95) protein is ATP phosphoribosyltransferase.